Reading from the N-terminus, the 48-residue chain is Glycine-rich RNA-binding protein 2 (48 aa).

This is Glycine-rich RNA-binding protein 2 from Populus euphratica (Euphrates poplar).